The chain runs to 383 residues: MDALEITQKLISYPTITPKECGIFEYIKSLFPHFKTLECGENGVKNLFLYRIFNPPKDHAEEKHAKENVKPLHFSFAGHIDVVPPGDHWQNDPFKPVIKEGFLYGRGAQDMKGGVGAFLSASLNFNPKTPFLLSILLTSDEEGPGIFGTKLMLEKLKEKDLLPHMAIVAEPTCEKVLGDSIKIGRRGSINGKLILKGIQGHAAYPKKCQNPIDTLASVLPLISGVNLDDGDEYFDPSKLVITNLHAGLGANNVTPASVEIIFNARHSLKTTKESLKEYLEKVLKDLPHTLELESSSSPFITASHSKLTSVLKENILKTCRTTPLLNTKGGTSDARFFSAHGIEVVEFGVINDRIHAIDERVSLKELELLEKVFLGVLEDLSEK.

Position 79 (H79) interacts with Zn(2+). The active site involves D81. D110 lines the Zn(2+) pocket. E141 acts as the Proton acceptor in catalysis. The Zn(2+) site is built by E142, E170, and H355.

Belongs to the peptidase M20A family. DapE subfamily. Homodimer. Zn(2+) serves as cofactor. The cofactor is Co(2+).

It catalyses the reaction N-succinyl-(2S,6S)-2,6-diaminopimelate + H2O = (2S,6S)-2,6-diaminopimelate + succinate. It functions in the pathway amino-acid biosynthesis; L-lysine biosynthesis via DAP pathway; LL-2,6-diaminopimelate from (S)-tetrahydrodipicolinate (succinylase route): step 3/3. Functionally, catalyzes the hydrolysis of N-succinyl-L,L-diaminopimelic acid (SDAP), forming succinate and LL-2,6-diaminopimelate (DAP), an intermediate involved in the bacterial biosynthesis of lysine and meso-diaminopimelic acid, an essential component of bacterial cell walls. This chain is Succinyl-diaminopimelate desuccinylase, found in Helicobacter pylori (strain HPAG1).